Here is a 385-residue protein sequence, read N- to C-terminus: DNA replication and repair protein RecF (385 aa).

Position 30-37 (30-37 (GRNGQGKT)) interacts with ATP.

The protein belongs to the RecF family.

It is found in the cytoplasm. Its function is as follows. The RecF protein is involved in DNA metabolism; it is required for DNA replication and normal SOS inducibility. RecF binds preferentially to single-stranded, linear DNA. It also seems to bind ATP. The chain is DNA replication and repair protein RecF from Leifsonia xyli subsp. xyli (strain CTCB07).